A 152-amino-acid chain; its full sequence is S-protein homolog 4 (152 aa).

An N-terminal signal peptide occupies residues 1 to 23 (MTTMLKTQVHVVVIYLLIQIAFS). Residue asparagine 71 is glycosylated (N-linked (GlcNAc...) asparagine).

This sequence belongs to the plant self-incompatibility (S1) protein family.

It localises to the secreted. In Arabidopsis thaliana (Mouse-ear cress), this protein is S-protein homolog 4.